A 218-amino-acid chain; its full sequence is Type II restriction enzyme KpnI (218 aa).

The catalysed reaction is Endonucleolytic cleavage of DNA to give specific double-stranded fragments with terminal 5'-phosphates.. In terms of biological role, a P subtype restriction enzyme that recognizes the double-stranded sequence 5'-GGTACC-3' and cleaves after C-5. This is Type II restriction enzyme KpnI from Klebsiella pneumoniae.